We begin with the raw amino-acid sequence, 136 residues long: ATP synthase epsilon chain (136 aa).

This sequence belongs to the ATPase epsilon chain family. In terms of assembly, F-type ATPases have 2 components, CF(1) - the catalytic core - and CF(0) - the membrane proton channel. CF(1) has five subunits: alpha(3), beta(3), gamma(1), delta(1), epsilon(1). CF(0) has three main subunits: a, b and c.

Its subcellular location is the cell inner membrane. Produces ATP from ADP in the presence of a proton gradient across the membrane. This Persephonella marina (strain DSM 14350 / EX-H1) protein is ATP synthase epsilon chain.